We begin with the raw amino-acid sequence, 55 residues long: Photosystem II reaction center protein K (55 aa).

The propeptide occupies Met-1–Ala-18. A helical membrane pass occupies residues Ile-26–Phe-46.

It belongs to the PsbK family. PSII is composed of 1 copy each of membrane proteins PsbA, PsbB, PsbC, PsbD, PsbE, PsbF, PsbH, PsbI, PsbJ, PsbK, PsbL, PsbM, PsbT, PsbX, PsbY, PsbZ, Psb30/Ycf12, at least 3 peripheral proteins of the oxygen-evolving complex and a large number of cofactors. It forms dimeric complexes.

It localises to the plastid. It is found in the chloroplast thylakoid membrane. In terms of biological role, one of the components of the core complex of photosystem II (PSII). PSII is a light-driven water:plastoquinone oxidoreductase that uses light energy to abstract electrons from H(2)O, generating O(2) and a proton gradient subsequently used for ATP formation. It consists of a core antenna complex that captures photons, and an electron transfer chain that converts photonic excitation into a charge separation. This is Photosystem II reaction center protein K from Marchantia polymorpha (Common liverwort).